Here is a 129-residue protein sequence, read N- to C-terminus: Small ribosomal subunit protein uS11 (129 aa).

It belongs to the universal ribosomal protein uS11 family. As to quaternary structure, part of the 30S ribosomal subunit. Interacts with proteins S7 and S18. Binds to IF-3.

Located on the platform of the 30S subunit, it bridges several disparate RNA helices of the 16S rRNA. Forms part of the Shine-Dalgarno cleft in the 70S ribosome. This chain is Small ribosomal subunit protein uS11, found in Bacillus cereus (strain G9842).